The following is a 448-amino-acid chain: MKVTDKKIEGCQASITVEMDPAEVEAGLSKTYRRLVKKVEIPGFRKGKTPRDVFEKYLGREKMLDEVVDDIVPEACQQAINDDEEIKPFAAPKIAMVTTEPFVFSARIPLPPVVELGDYKTIRAAKEKVEITEENIDTVIDQVLHQRATWEKAERPVKMGDMLLMKVESTLNGEPYLNREDMQYSVREEAIYPAPGFGEHLVDMVVGEPKEFSIVFPEDHARAELAGKTAAFKVTIQEIREEKLPELNDAFAHELNPEFNTLAELRQRIRENMQERQDDQAQAKFEDQIVEALIKMSKIDYPEVMVETELDQIIEQQLQRLQSTIKSPEEFRATLSQLSPADMQQRYRPLAEQRVASSLALGKLATTENLIPSDEEVDAEIERLTQDSGDKKEEEKAFYNKPDTRDRLIQLLTARKTMAFIDEIALQPALEAVEPKSDEGEKTEEADK.

The PPIase FKBP-type domain occupies 160 to 245 (GDMLLMKVES…IQEIREEKLP (86 aa)).

This sequence belongs to the FKBP-type PPIase family. Tig subfamily.

The protein localises to the cytoplasm. The enzyme catalyses [protein]-peptidylproline (omega=180) = [protein]-peptidylproline (omega=0). In terms of biological role, involved in protein export. Acts as a chaperone by maintaining the newly synthesized protein in an open conformation. Functions as a peptidyl-prolyl cis-trans isomerase. The sequence is that of Trigger factor from Dehalococcoides mccartyi (strain ATCC BAA-2266 / KCTC 15142 / 195) (Dehalococcoides ethenogenes (strain 195)).